Consider the following 1286-residue polypeptide: Protein patched (1286 aa).

The Cytoplasmic segment spans residues Met1–Lys76. The helical transmembrane segment at Val77–Leu92 threads the bilayer. Topologically, residues Lys93–Pro427 are extracellular. 4 N-linked (GlcNAc...) asparagine glycosylation sites follow: Asn142, Asn298, Asn335, and Asn388. Residues Ser428–Leu448 form a helical membrane-spanning segment. Residues Ser428–Leu583 enclose the SSD domain. At Arg449–Val465 the chain is on the cytoplasmic side. Residues Leu466–Phe486 form a helical membrane-spanning segment. The Extracellular portion of the chain corresponds to Asn487 to Gln492. The chain crosses the membrane as a helical span at residues Val493–Ala511. The Cytoplasmic segment spans residues Ala512–Ser532. The helical transmembrane segment at Ile533 to Pro553 threads the bilayer. Topologically, residues Ala554–Ala562 are extracellular. The chain crosses the membrane as a helical span at residues Ala563–Leu583. Residues Asp584–Ser677 are Cytoplasmic-facing. The chain crosses the membrane as a helical span at residues Trp678–Thr699. Residues Arg700–Gly931 are Extracellular-facing. N-linked (GlcNAc...) asparagine glycosylation occurs at Asn807. A helical membrane pass occupies residues Phe932 to Leu952. Residues Arg953–Ser955 lie on the Cytoplasmic side of the membrane. The helical transmembrane segment at Leu956 to Leu976 threads the bilayer. The Extracellular portion of the chain corresponds to Ser977–Ser1007. A helical transmembrane segment spans residues Ala1008–Ile1028. Residues Ser1029 to His1056 are Cytoplasmic-facing. A helical transmembrane segment spans residues Gly1057–Ile1077. Residues Arg1078 to Trp1082 are Extracellular-facing. Residues Leu1083–Leu1103 form a helical membrane-spanning segment. The Cytoplasmic segment spans residues Ser1104–Ser1286. The disordered stretch occupies residues Glu1116 to Pro1237. 2 stretches are compositionally biased toward polar residues: residues Val1141 to Gln1152 and Pro1165 to Thr1191. Positions Pro1199 to Gln1216 are enriched in low complexity. Positions Pro1224–Tyr1235 are enriched in pro residues.

It belongs to the patched family. As to quaternary structure, interacts (via C-terminal cytoplasmic region) with CG5504/l(2)tid; the interaction is probably direct. Interacts with hh/hedgehog.

It localises to the membrane. In terms of biological role, segmentation polarity protein. Acts as a receptor for the hedgehog protein (hh). Associates with the smoothened protein (SMO) to transduce the hedgehog signal leading to the activation of wingless, decapentaplegic and patched itself. Participates in cell interactions that establish pattern within the segment and the imaginal disks during development. In the absence of HH, represses the constitutive signaling activity of smo through fused (FU). This is Protein patched from Drosophila melanogaster (Fruit fly).